The sequence spans 647 residues: NADP-dependent malic enzyme, chloroplastic (647 aa).

The transit peptide at 1-61 directs the protein to the chloroplast; the sequence is MMSLNSSSVV…VDGAVKDVNA (61 aa). The active-site Proton donor is Tyr-195. Position 248 (Arg-248) interacts with NAD(+). Residue Lys-266 is the Proton acceptor of the active site. A divalent metal cation is bound by residues Glu-338, Asp-339, and Asp-362. Asp-362 provides a ligand contact to NAD(+). Residue 391–407 participates in NADP(+) binding; sequence LFLGAGEAGTGIAELIA. Residue Asn-503 coordinates NAD(+).

This sequence belongs to the malic enzymes family. As to quaternary structure, homotetramer. Requires Mg(2+) as cofactor. The cofactor is Mn(2+).

The protein localises to the plastid. It is found in the chloroplast. It carries out the reaction (S)-malate + NADP(+) = pyruvate + CO2 + NADPH. The enzyme catalyses oxaloacetate + H(+) = pyruvate + CO2. The protein operates within photosynthesis; C3 acid pathway. Its function is as follows. The chloroplastic ME isoform decarboxylates malate shuttled from neighboring mesophyll cells. The CO(2) released is then refixed by ribulose-bisphosphate carboxylase. This pathway eliminates the photorespiratory loss of CO(2) that occurs in most plants. In Flaveria pringlei, this protein is NADP-dependent malic enzyme, chloroplastic (MODA).